A 302-amino-acid chain; its full sequence is Small ribosomal subunit protein uS3 (302 aa).

The 70-residue stretch at I17–E86 folds into the KH type-2 domain. Residues E222 to E302 form a disordered region.

This sequence belongs to the universal ribosomal protein uS3 family. In terms of assembly, part of the 30S ribosomal subunit.

Its function is as follows. Binds the lower part of the 30S subunit head. This is Small ribosomal subunit protein uS3 from Halobacterium salinarum (strain ATCC 700922 / JCM 11081 / NRC-1) (Halobacterium halobium).